Here is a 366-residue protein sequence, read N- to C-terminus: Proline-rich protein 19 (366 aa).

4 disordered regions span residues 1–53 (MDPR…RDPC), 102–149 (ESHT…DLPV), 256–286 (TPAHRGSQVQPPGHQLPFLSSASSPSGAAWG), and 301–338 (ATPPPPPPQPWDVRPPQPLPQPPSPLLPRTSALDWSPN). Positions 18–29 (GRIRRRKTRRER) are enriched in basic residues. Composition is skewed to polar residues over residues 104–113 (HTPQLPTKPS) and 256–265 (TPAHRGSQVQ). Residues 275–286 (SSASSPSGAAWG) show a composition bias toward low complexity. Pro residues predominate over residues 302–326 (TPPPPPPQPWDVRPPQPLPQPPSPL).

Interacts with CNTD1. In terms of tissue distribution, preferentially expressed in gonads.

The protein localises to the nucleus. Its subcellular location is the chromosome. Its function is as follows. Promotes meiotic crossing over formation through its interaction with CNTD1 by participating in the crossover differentiation step of crossover-specific recombination intermediates. This Mus musculus (Mouse) protein is Proline-rich protein 19.